A 123-amino-acid chain; its full sequence is Unknown 12C protein (123 aa).

An N-terminal signal peptide occupies residues 1–17 (MMSALFLVLSVSLLVSG).

In terms of processing, contains 6 disulfide bonds. In terms of tissue distribution, expressed in acontia, a specialised envenomation structure laden with batteries of venom-containing nematocysts found only in the superfamily Metridioidea.

It is found in the secreted. Its subcellular location is the nematocyst. Its function is as follows. Cysteine-rich protein with probable toxin activity. The sequence is that of Unknown 12C protein from Calliactis polypus (Hermit crab anemone).